Here is a 335-residue protein sequence, read N- to C-terminus: tRNA pseudouridine synthase D (335 aa).

The Nucleophile role is filled by Asp-77. Residues 152–308 (GFPNYFTEQR…AQHLSWSFIP (157 aa)) form the TRUD domain.

It belongs to the pseudouridine synthase TruD family.

It carries out the reaction uridine(13) in tRNA = pseudouridine(13) in tRNA. Responsible for synthesis of pseudouridine from uracil-13 in transfer RNAs. This is tRNA pseudouridine synthase D from Histophilus somni (strain 129Pt) (Haemophilus somnus).